Reading from the N-terminus, the 375-residue chain is Fluoride export protein 1 (375 aa).

The Cytoplasmic portion of the chain corresponds to 1–11 (MIFNPVISNHK). A helical membrane pass occupies residues 12 to 32 (LSHYIHVFCTFTTFCILGTET). Over 33–34 (RQ) the chain is Extracellular. A helical transmembrane segment spans residues 35–55 (AITALSTYTPAFVTAPTVLWS). Residues 56–79 (NCSSCMLMGIMQSLNAYTWMKDHQ) lie on the Cytoplasmic side of the membrane. Residues 80 to 100 (VLFLGVTTGYCGALSSFSSML) form a helical membrane-spanning segment. Topologically, residues 101–127 (LEMFEHSTNLTNGNIANHTKLPNRAYG) are extracellular. Asn109 and Asn117 each carry an N-linked (GlcNAc...) asparagine glycan. Residues 128-148 (IMEFLSVLLVHLMVSMGSLIF) traverse the membrane as a helical segment. Residues 149 to 213 (GRQLGKEVIV…FKKFFDIVDK (65 aa)) are Cytoplasmic-facing. The chain crosses the membrane as a helical span at residues 214 to 234 (LAYALAFPLIILFVVLCAYYE). N-linked (GlcNAc...) asparagine glycosylation is present at Asn235. Over 235-241 (NYSRGKW) the chain is Extracellular. The chain crosses the membrane as a helical span at residues 242–262 (TLPCLFGIFAGFLRYWLAEMF). Residues 263–268 (NKTNKK) are Cytoplasmic-facing. The helical transmembrane segment at 269 to 289 (FPLGTFLANVFATLLIGIFTM) threads the bilayer. Over 290-310 (VQRGKKHFSTDVPIVNSLNSC) the chain is Extracellular. A helical transmembrane segment spans residues 311–331 (HIVSALISGFCGTLSTISTFI). Over 332–338 (NEGYKLS) the chain is Cytoplasmic. A helical membrane pass occupies residues 339–359 (FINMLIYYTVSIAISYCLLVI). The Extracellular portion of the chain corresponds to 360–375 (TLGSYAWTRGLTNPIC).

Belongs to the fluoride channel Fluc/FEX (TC 1.A.43) family.

The protein localises to the cell membrane. The catalysed reaction is fluoride(in) = fluoride(out). In terms of biological role, fluoride channel required for the rapid expulsion of cytoplasmic fluoride. This is Fluoride export protein 1 from Saccharomyces cerevisiae (strain ATCC 204508 / S288c) (Baker's yeast).